The primary structure comprises 306 residues: UDP-3-O-acyl-N-acetylglucosamine deacetylase (306 aa).

The Zn(2+) site is built by His-79, His-238, and Asp-242. Catalysis depends on His-265, which acts as the Proton donor.

It belongs to the LpxC family. Zn(2+) serves as cofactor.

It carries out the reaction a UDP-3-O-[(3R)-3-hydroxyacyl]-N-acetyl-alpha-D-glucosamine + H2O = a UDP-3-O-[(3R)-3-hydroxyacyl]-alpha-D-glucosamine + acetate. The protein operates within glycolipid biosynthesis; lipid IV(A) biosynthesis; lipid IV(A) from (3R)-3-hydroxytetradecanoyl-[acyl-carrier-protein] and UDP-N-acetyl-alpha-D-glucosamine: step 2/6. Its function is as follows. Catalyzes the hydrolysis of UDP-3-O-myristoyl-N-acetylglucosamine to form UDP-3-O-myristoylglucosamine and acetate, the committed step in lipid A biosynthesis. In Idiomarina loihiensis (strain ATCC BAA-735 / DSM 15497 / L2-TR), this protein is UDP-3-O-acyl-N-acetylglucosamine deacetylase.